The sequence spans 114 residues: Non-specific lipid-transfer protein 1 (114 aa).

An N-terminal signal peptide occupies residues 1–23; that stretch reads MEMVSKIACFVLLCMVVVAPHAE. Disulfide bonds link C27–C73, C37–C50, C51–C96, and C71–C110.

This sequence belongs to the plant LTP family.

Functionally, plant non-specific lipid-transfer proteins transfer phospholipids as well as galactolipids across membranes. May play a role in wax or cutin deposition in the cell walls of expanding epidermal cells and certain secretory tissues. This Solanum pennellii (Tomato) protein is Non-specific lipid-transfer protein 1 (LTP1).